Here is a 471-residue protein sequence, read N- to C-terminus: Secretogranin-3 (471 aa).

Residues 1–22 (MGFLWTGTWIVVLMLHSSPIQA) form the signal peptide. 2 disordered regions span residues 23–72 (FPKP…ESNY) and 86–105 (EKEK…NDNK). Over residues 32-45 (KPLHNRELSAERPL) the composition is skewed to basic and acidic residues. Serine 40 carries the post-translational modification Phosphoserine. Residue serine 40 is glycosylated (O-linked (Xyl...) (chondroitin sulfate) serine). Asparagine 71 is a glycosylation site (N-linked (GlcNAc...) asparagine). A compositionally biased stretch (basic and acidic residues) spans 86–96 (EKEKNEKERQS). The N-linked (GlcNAc...) asparagine glycan is linked to asparagine 353. Positions 357-409 (LFAVPSEKSHEETDSTKEEAAKMEKEYGTLKDSTKDDDSNPRGKTDEHKGKTE) are disordered. Positions 363–409 (EKSHEETDSTKEEAAKMEKEYGTLKDSTKDDDSNPRGKTDEHKGKTE) are enriched in basic and acidic residues. Serine 365 is modified (phosphoserine).

Interacts with CHGA. Interacts with secretogranin II/SCG2. Interacts (via C-terminus) with CPE.

It is found in the cytoplasmic vesicle. Its subcellular location is the secretory vesicle. The protein resides in the secretory vesicle membrane. The protein localises to the secreted. Member of the granin protein family that regulates the biogenesis of secretory granules. Acts as a sorting receptor for intragranular proteins including chromogranin A/CHGA. May also play a role in angiogenesis. Promotes endothelial proliferation, migration and tube formation through MEK/ERK signaling pathway. The chain is Secretogranin-3 (SCG3) from Bos taurus (Bovine).